We begin with the raw amino-acid sequence, 662 residues long: Transforming growth factor beta activator LRRC32 (662 aa).

An N-terminal signal peptide occupies residues 1–17 (MRPQILLLLALLTLGLA). Residues 18–625 (AQRQDKVPCK…EDCEKGGLKN (608 aa)) lie on the Extracellular side of the membrane. The 28-residue stretch at 21 to 48 (QDKVPCKMVDKKVSCQGLGLLQVPSVLP) folds into the LRRNT domain. LRR repeat units lie at residues 50 to 73 (DTET…GFYT), 74 to 95 (ALRH…AFQA), 98 to 119 (HLEH…SAGG), 125 to 145 (RVTS…ERLL), 150 to 171 (SLHT…TFRD), 174 to 195 (VLEQ…AFEG), 198 to 219 (RLTH…SLQQ), 220 to 240 (LRVL…SQPQ), 244 to 265 (QLTW…AALP), and 266 to 286 (RLIY…PPQD). A glycan (N-linked (GlcNAc...) asparagine) is linked at Asn-203. N-linked (GlcNAc...) asparagine glycans are attached at residues Asn-271 and Asn-308. LRR repeat units lie at residues 316-339 (QLLN…EHLT), 340-361 (SLCF…RSGS), 364-385 (CLML…ARAL), 387-408 (SLRT…TFAN), 411-432 (SLQR…DEPG), 444-465 (SLHS…AFLH), 467-488 (PLTE…ALGG), 492-513 (SLEV…LPCF), 515-536 (CLKR…TQAV), and 537-558 (SLEV…AMGG). Asn-345 carries an N-linked (GlcNAc...) asparagine glycan. Asn-545 carries N-linked (GlcNAc...) asparagine glycosylation. Residues 571–620 (NPLSCCGNGWLAAQLHQGRVDVDATQDLICRFSSQEEVSLSHVRPEDCEK) form the LRRCT domain. A helical transmembrane segment spans residues 626–646 (INLIIILTFILVSAILLTTLA). Topologically, residues 647–662 (TCCCVRRQKFNQQYKA) are cytoplasmic.

This sequence belongs to the LRRC32/LRRC33 family. Interacts with TGFB1; associates via disulfide bonds with the Latency-associated peptide chain (LAP) regulatory chain of TGFB1, leading to regulate activation of TGF-beta-1. Interacts with TGFB2. Interacts with TGFB3; associates via disulfide bonds with the Latency-associated peptide chain (LAP) regulatory chain of TGFB3, leading to regulate activation of TGF-beta-3. Interacts with LAPTM4B; decreases TGFB1 production in regulatory T-cells.

Its subcellular location is the cell membrane. It localises to the cell surface. Its function is as follows. Key regulator of transforming growth factor beta (TGFB1, TGFB2 and TGFB3) that controls TGF-beta activation by maintaining it in a latent state during storage in extracellular space. Associates specifically via disulfide bonds with the Latency-associated peptide (LAP), which is the regulatory chain of TGF-beta, and regulates integrin-dependent activation of TGF-beta. Able to outcompete LTBP1 for binding to LAP regulatory chain of TGF-beta. Controls activation of TGF-beta-1 (TGFB1) on the surface of activated regulatory T-cells (Tregs). Required for epithelial fusion during palate development by regulating activation of TGF-beta-3 (TGFB3). This Pongo abelii (Sumatran orangutan) protein is Transforming growth factor beta activator LRRC32.